A 1186-amino-acid polypeptide reads, in one-letter code: ATP-dependent helicase/nuclease subunit A (1186 aa).

The region spanning 2-460 (NFSKNQRAVI…IELSENYRSQ (459 aa)) is the UvrD-like helicase ATP-binding domain. 23–30 (ASAGSGKT) is an ATP binding site. Residues 487–771 (DVELKAANRD…SVMTIHAAKG (285 aa)) form the UvrD-like helicase C-terminal domain.

It belongs to the helicase family. AddA subfamily. As to quaternary structure, heterodimer of AddA and AddB/RexB. The cofactor is Mg(2+).

The enzyme catalyses Couples ATP hydrolysis with the unwinding of duplex DNA by translocating in the 3'-5' direction.. It catalyses the reaction ATP + H2O = ADP + phosphate + H(+). Functionally, the heterodimer acts as both an ATP-dependent DNA helicase and an ATP-dependent, dual-direction single-stranded exonuclease. Recognizes the chi site generating a DNA molecule suitable for the initiation of homologous recombination. The AddA nuclease domain is required for chi fragment generation; this subunit has the helicase and 3' -&gt; 5' nuclease activities. This Oenococcus oeni (strain ATCC BAA-331 / PSU-1) protein is ATP-dependent helicase/nuclease subunit A.